The primary structure comprises 442 residues: tRNA modification GTPase MnmE (442 aa).

3 residues coordinate (6S)-5-formyl-5,6,7,8-tetrahydrofolate: R24, E82, and K120. The TrmE-type G domain occupies 217–367 (GLHIVITGEP…LISLIKEKAE (151 aa)). GTP contacts are provided by residues 227-232 (NVGKST), 246-252 (SEYAGTT), and 271-274 (DTAG). The Mg(2+) site is built by S231 and T252. Residue K442 participates in (6S)-5-formyl-5,6,7,8-tetrahydrofolate binding.

Belongs to the TRAFAC class TrmE-Era-EngA-EngB-Septin-like GTPase superfamily. TrmE GTPase family. Homodimer. Heterotetramer of two MnmE and two MnmG subunits. Requires K(+) as cofactor.

It localises to the cytoplasm. In terms of biological role, exhibits a very high intrinsic GTPase hydrolysis rate. Involved in the addition of a carboxymethylaminomethyl (cmnm) group at the wobble position (U34) of certain tRNAs, forming tRNA-cmnm(5)s(2)U34. The protein is tRNA modification GTPase MnmE of Wolbachia sp. subsp. Drosophila simulans (strain wRi).